We begin with the raw amino-acid sequence, 417 residues long: Glutamyl-tRNA reductase (417 aa).

Residues 49-52 (TCNR), serine 107, 112-114 (EEQ), and glutamine 118 each bind substrate. Cysteine 50 functions as the Nucleophile in the catalytic mechanism. 187-192 (GTGEVS) contributes to the NADP(+) binding site.

This sequence belongs to the glutamyl-tRNA reductase family. As to quaternary structure, homodimer.

The enzyme catalyses (S)-4-amino-5-oxopentanoate + tRNA(Glu) + NADP(+) = L-glutamyl-tRNA(Glu) + NADPH + H(+). It functions in the pathway porphyrin-containing compound metabolism; protoporphyrin-IX biosynthesis; 5-aminolevulinate from L-glutamyl-tRNA(Glu): step 1/2. In terms of biological role, catalyzes the NADPH-dependent reduction of glutamyl-tRNA(Glu) to glutamate 1-semialdehyde (GSA). This is Glutamyl-tRNA reductase from Cenarchaeum symbiosum (strain A).